Here is a 61-residue protein sequence, read N- to C-terminus: Inner membrane protein p12 (61 aa).

Residues leucine 16–methionine 36 form a helical membrane-spanning segment.

It belongs to the asfivirus inner membrane protein p12 family. In terms of assembly, homomultimer; disulfide-linked. Not glycosylated.

It localises to the virion membrane. This is Inner membrane protein p12 from Ornithodoros (relapsing fever ticks).